The chain runs to 418 residues: Gamma-glutamyl phosphate reductase (418 aa).

Belongs to the gamma-glutamyl phosphate reductase family.

The protein resides in the cytoplasm. The enzyme catalyses L-glutamate 5-semialdehyde + phosphate + NADP(+) = L-glutamyl 5-phosphate + NADPH + H(+). The protein operates within amino-acid biosynthesis; L-proline biosynthesis; L-glutamate 5-semialdehyde from L-glutamate: step 2/2. Functionally, catalyzes the NADPH-dependent reduction of L-glutamate 5-phosphate into L-glutamate 5-semialdehyde and phosphate. The product spontaneously undergoes cyclization to form 1-pyrroline-5-carboxylate. This Geobacter sp. (strain M21) protein is Gamma-glutamyl phosphate reductase.